The following is a 382-amino-acid chain: Gas vesicle protein C1 (382 aa).

Over residues 1-18 (MSVTDKRDEMSTARDKFA) the composition is skewed to basic and acidic residues. The disordered stretch occupies residues 1–21 (MSVTDKRDEMSTARDKFAESQ). Tandem repeats lie at residues 22–60 (QEFE…TNTT), 61–92 (DAFH…REMQ), 93–130 (DAFE…NSTH), 131–168 (GAFE…IAVQ), 169–200 (DAFD…DATA), 201–240 (DAFA…ETTE), and 241–284 (DAFV…VSPD). The tract at residues 22 to 284 (QEFESYADEF…VEAEAEVSPD (263 aa)) is 7 X approximate tandem repeats. The span at 260–302 (GAAEAEAEPVEADADVEAEAEVSPDEAGGESAGTEEEETEPAE) shows a compositional bias: acidic residues. Positions 260–382 (GAAEAEAEPV…DVPLRPDDKT (123 aa)) are disordered. Low complexity predominate over residues 303 to 316 (VETAAPEVEGSPAD). Acidic residues predominate over residues 317-336 (TADEAEDTEAEEETEEEAPE). Residues 365–382 (EYRDEYGEDVPLRPDDKT) show a composition bias toward basic and acidic residues.

The protein belongs to the halobacterial gas vesicle GvpC family. Forms homodimers, interacts with GvpF1, GvpH1, GvpI1, GvpL1, GvpN1 and GvpO1 via its C-terminus (residues 329-382).

It localises to the gas vesicle. It is found in the cytoplasm. Confers stability, involved in shaping gas vesicles. Gas vesicles are hollow, gas filled proteinaceous nanostructures found in several microbial planktonic microorganisms. They allow positioning of halobacteria at the optimal depth for growth in the poorly aerated, shallow brine pools of their habitat. Functionally, expression of a 9.5 kb p-vac DNA fragment containing 2 divergently transcribed regions (gvpD-gvpE-gvpF-gvpG-gvpH-gvpI-gvpJ-gvpK-gvpL-gvpM and gvpA-gvpC-gvpN-gvpO) allows H.volcanii to produce gas vesicles. A similar region restores gas vesicle production in H.halobium without the p-vac locus, but it still has the c-vac locus. This Halobacterium salinarum (strain ATCC 700922 / JCM 11081 / NRC-1) (Halobacterium halobium) protein is Gas vesicle protein C1 (gvpC1).